We begin with the raw amino-acid sequence, 72 residues long: MIERKYDVDGKEVIVKIEILGAVPPQVVFEIVADKDTLSKYIDGNTLSFAIDIDDIFDAIRETLAPKKVLRD.

This is an uncharacterized protein from Acidianus filamentous virus 2 (isolate Italy/Pozzuoli) (AFV-2).